The following is a 124-amino-acid chain: Holo-[acyl-carrier-protein] synthase (124 aa).

Mg(2+)-binding residues include aspartate 8 and glutamate 55.

Belongs to the P-Pant transferase superfamily. AcpS family. The cofactor is Mg(2+).

Its subcellular location is the cytoplasm. The catalysed reaction is apo-[ACP] + CoA = holo-[ACP] + adenosine 3',5'-bisphosphate + H(+). Functionally, transfers the 4'-phosphopantetheine moiety from coenzyme A to a Ser of acyl-carrier-protein. The protein is Holo-[acyl-carrier-protein] synthase of Desulfovibrio desulfuricans (strain ATCC 27774 / DSM 6949 / MB).